The primary structure comprises 399 residues: Tyrosine--tRNA ligase (399 aa).

The 'HIGH' region motif lies at 42-51 (PTAPDIHLGH). The 'KMSKS' region signature appears at 226 to 230 (KMSKS). K229 provides a ligand contact to ATP. One can recognise an S4 RNA-binding domain in the interval 337 to 398 (LTIGYILQRA…GKRRFAKVKV (62 aa)).

Belongs to the class-I aminoacyl-tRNA synthetase family. TyrS type 2 subfamily. As to quaternary structure, homodimer.

The protein resides in the cytoplasm. It carries out the reaction tRNA(Tyr) + L-tyrosine + ATP = L-tyrosyl-tRNA(Tyr) + AMP + diphosphate + H(+). In terms of biological role, catalyzes the attachment of tyrosine to tRNA(Tyr) in a two-step reaction: tyrosine is first activated by ATP to form Tyr-AMP and then transferred to the acceptor end of tRNA(Tyr). This is Tyrosine--tRNA ligase from Coxiella burnetii (strain RSA 493 / Nine Mile phase I).